We begin with the raw amino-acid sequence, 360 residues long: Dehydrogenase mokE (360 aa).

50 to 53 (SDTK) provides a ligand contact to NADP(+). 134 to 141 (AGISTAGL) lines the substrate pocket. Residues 173–176 (STAT), 196–199 (SPHN), Tyr-214, 261–262 (LN), and Thr-279 contribute to the NADP(+) site. A substrate-binding site is contributed by 281 to 285 (GPTIF). Residue 350–351 (LS) participates in NADP(+) binding.

It belongs to the zinc-containing alcohol dehydrogenase family. As to quaternary structure, monomer.

Its pathway is polyketide biosynthesis; lovastatin biosynthesis. Functionally, dehydrogenase; part of the gene cluster that mediates the biosynthesis of monakolin K, also known as lovastatin, and which acts as a potent competitive inhibitor of HMG-CoA reductase. Monakolin K biosynthesis is performed in two stages. The first stage is catalyzed by the nonaketide synthase mokA, which belongs to type I polyketide synthases and catalyzes the iterative nine-step formation of the polyketide. This PKS stage is completed by the action of dehydrogenase mokE, which catalyzes the NADPH-dependent reduction of the unsaturated tetra-, penta- and heptaketide intermediates that arise during the mokA-mediated biosynthesis of the nonaketide chain and leads to dihydromonacolin L. Covalently bound dihydromonacolin L is released from mokA by the mokD esterase. Conversion of dihydromonacolin L into monacolin L and then monacolin J is subsequently performed with the participation of molecular oxygen and P450 monoogygenase mokC. Finally, mokF performs the conversion of monacoline J to monacoline K through the addition of the side-chain diketide moiety (2R)-2-methylbutanoate produced by the diketide synthase mokB. In Monascus pilosus (Red mold), this protein is Dehydrogenase mokE.